The sequence spans 121 residues: Nitrogenase-stabilizing/protective protein NifW (121 aa).

Belongs to the NifW family. As to quaternary structure, homotrimer; associates with NifD.

Its function is as follows. May protect the nitrogenase Fe-Mo protein from oxidative damage. In Synechococcus sp. (strain JA-2-3B'a(2-13)) (Cyanobacteria bacterium Yellowstone B-Prime), this protein is Nitrogenase-stabilizing/protective protein NifW.